A 256-amino-acid chain; its full sequence is Floral homeotic protein APETALA 1-2 (256 aa).

The MADS-box domain maps to 1 to 61 (MGRGRVQLKR…GKLFEYSTDS (61 aa)). In terms of domain architecture, K-box spans 88–178 (NTNWSMEYNR…SKQIKERENV (91 aa)). The segment at 187–206 (DEQNHGHNMPPPPPPQQHQI) is disordered.

In terms of assembly, homodimer capable of binding to CArG-box sequences.

The protein resides in the nucleus. Functionally, transcription factor that promotes early floral meristem identity in synergy with LEAFY. Displays a redundant function with CAULIFLOWER in the up-regulation of LEAFY. Required subsequently for the transition of an inflorescence meristem into a floral meristem, and for the normal development of sepals and petals in flowers. Regulates positively B class homeotic proteins. The chain is Floral homeotic protein APETALA 1-2 (2AP1) from Brassica oleracea var. italica (Broccoli).